Reading from the N-terminus, the 338-residue chain is Ketol-acid reductoisomerase (NADP(+)) (338 aa).

The 181-residue stretch at 1-181 folds into the KARI N-terminal Rossmann domain; that stretch reads MKVFYDKDAD…GGGRAGIIET (181 aa). NADP(+) contacts are provided by residues 24–27, R47, and S52; that span reads YGSQ. Residue H107 is part of the active site. G133 contacts NADP(+). Residues 182-327 form the KARI C-terminal knotted domain; it reads NFREETETDL…AKLRAMMPWI (146 aa). Positions 190, 194, 226, and 230 each coordinate Mg(2+). S251 provides a ligand contact to substrate.

The protein belongs to the ketol-acid reductoisomerase family. Requires Mg(2+) as cofactor.

It catalyses the reaction (2R)-2,3-dihydroxy-3-methylbutanoate + NADP(+) = (2S)-2-acetolactate + NADPH + H(+). The catalysed reaction is (2R,3R)-2,3-dihydroxy-3-methylpentanoate + NADP(+) = (S)-2-ethyl-2-hydroxy-3-oxobutanoate + NADPH + H(+). It participates in amino-acid biosynthesis; L-isoleucine biosynthesis; L-isoleucine from 2-oxobutanoate: step 2/4. It functions in the pathway amino-acid biosynthesis; L-valine biosynthesis; L-valine from pyruvate: step 2/4. Functionally, involved in the biosynthesis of branched-chain amino acids (BCAA). Catalyzes an alkyl-migration followed by a ketol-acid reduction of (S)-2-acetolactate (S2AL) to yield (R)-2,3-dihydroxy-isovalerate. In the isomerase reaction, S2AL is rearranged via a Mg-dependent methyl migration to produce 3-hydroxy-3-methyl-2-ketobutyrate (HMKB). In the reductase reaction, this 2-ketoacid undergoes a metal-dependent reduction by NADPH to yield (R)-2,3-dihydroxy-isovalerate. The polypeptide is Ketol-acid reductoisomerase (NADP(+)) (Polynucleobacter necessarius subsp. necessarius (strain STIR1)).